The following is a 294-amino-acid chain: Cytosolic Fe-S cluster assembly factor CFD1 (294 aa).

25-32 (GKGGVGKS) lines the ATP pocket. The [4Fe-4S] cluster site is built by Cys-214 and Cys-217.

The protein belongs to the Mrp/NBP35 ATP-binding proteins family. NUBP2/CFD1 subfamily. In terms of assembly, heterotetramer of 2 NBP35 and 2 CFD1 chains. [4Fe-4S] cluster serves as cofactor.

It localises to the cytoplasm. In terms of biological role, component of the cytosolic iron-sulfur (Fe/S) protein assembly (CIA) machinery. Required for maturation of extramitochondrial Fe-S proteins. The NBP35-CFD1 heterotetramer forms a Fe-S scaffold complex, mediating the de novo assembly of an Fe-S cluster and its transfer to target apoproteins. Required for biogenesis and export of both ribosomal subunits, which may reflect a role in assembly of the Fe/S clusters in RLI1, a protein which performs rRNA processing and ribosome export. The protein is Cytosolic Fe-S cluster assembly factor CFD1 of Candida albicans (strain SC5314 / ATCC MYA-2876) (Yeast).